Consider the following 147-residue polypeptide: Peptide methionine sulfoxide reductase MsrB (147 aa).

In terms of domain architecture, MsrB spans 8-131; the sequence is KEELKKILTE…NSASLKFIPK (124 aa). C120 serves as the catalytic Nucleophile.

It belongs to the MsrB Met sulfoxide reductase family.

It carries out the reaction L-methionyl-[protein] + [thioredoxin]-disulfide + H2O = L-methionyl-(R)-S-oxide-[protein] + [thioredoxin]-dithiol. The polypeptide is Peptide methionine sulfoxide reductase MsrB (Clostridium perfringens (strain SM101 / Type A)).